Reading from the N-terminus, the 183-residue chain is Peptidyl-tRNA hydrolase (183 aa).

Tyr-14 contributes to the tRNA binding site. His-19 serves as the catalytic Proton acceptor. Residues Tyr-61, Asn-63, and Asn-109 each contribute to the tRNA site.

Belongs to the PTH family. Monomer.

Its subcellular location is the cytoplasm. The catalysed reaction is an N-acyl-L-alpha-aminoacyl-tRNA + H2O = an N-acyl-L-amino acid + a tRNA + H(+). Functionally, hydrolyzes ribosome-free peptidyl-tRNAs (with 1 or more amino acids incorporated), which drop off the ribosome during protein synthesis, or as a result of ribosome stalling. Catalyzes the release of premature peptidyl moieties from peptidyl-tRNA molecules trapped in stalled 50S ribosomal subunits, and thus maintains levels of free tRNAs and 50S ribosomes. This Aliarcobacter butzleri (strain RM4018) (Arcobacter butzleri) protein is Peptidyl-tRNA hydrolase.